Consider the following 125-residue polypeptide: Protein ApaG (125 aa).

The region spanning 1-125 (MINAPRVCVQ…FRLAIPSLIH (125 aa)) is the ApaG domain.

This chain is Protein ApaG, found in Pectobacterium atrosepticum (strain SCRI 1043 / ATCC BAA-672) (Erwinia carotovora subsp. atroseptica).